The following is a 20-amino-acid chain: Apidaecin 1+ (20 aa).

The interval 1–20 is disordered; it reads GKPNRPRPAPIQPRPPHPRL.

This sequence belongs to the apidaecin family.

It is found in the secreted. Functionally, antimicrobial peptide active against many Gram-negative enterobacterial and plant-associated bacterial species. Not active against other bacterial species like H.pylori, P.mirabilis, B.pertussis or N.gonorrhoeae. In terms of biological role, among others, also active against C.jejuni and L.pneumophila but not against Y.enterocolitica. Its function is as follows. Among others, also active against Y.enterocolitica butnot against L.pneumophila and C.jejuni. The protein is Apidaecin 1+ of Pimpla disparis (Parasitic wasp).